A 175-amino-acid polypeptide reads, in one-letter code: Nucleoside diphosphate kinase 6 (175 aa).

6 residues coordinate ATP: K8, F57, R85, T91, R105, and N115. The active-site Pros-phosphohistidine intermediate is the H118.

This sequence belongs to the NDK family. Mg(2+) is required as a cofactor.

The enzyme catalyses a 2'-deoxyribonucleoside 5'-diphosphate + ATP = a 2'-deoxyribonucleoside 5'-triphosphate + ADP. The catalysed reaction is a ribonucleoside 5'-diphosphate + ATP = a ribonucleoside 5'-triphosphate + ADP. Its function is as follows. Major role in the synthesis of nucleoside triphosphates other than ATP. The ATP gamma phosphate is transferred to the NDP beta phosphate via a ping-pong mechanism, using a phosphorylated active-site intermediate. The protein is Nucleoside diphosphate kinase 6 (Nme6) of Rattus norvegicus (Rat).